A 328-amino-acid chain; its full sequence is Phosphatidylglycerol--prolipoprotein diacylglyceryl transferase (328 aa).

Transmembrane regions (helical) follow at residues 15 to 35 (VIQG…ILIS), 57 to 77 (IFMF…STLV), and 106 to 126 (GMAI…TINT). Residue Arg156 participates in a 1,2-diacyl-sn-glycero-3-phospho-(1'-sn-glycerol) binding. 2 helical membrane passes run 242-262 (GFIF…IEYL) and 289-309 (ISMG…WIIV).

Belongs to the Lgt family.

The protein localises to the cell inner membrane. The enzyme catalyses L-cysteinyl-[prolipoprotein] + a 1,2-diacyl-sn-glycero-3-phospho-(1'-sn-glycerol) = an S-1,2-diacyl-sn-glyceryl-L-cysteinyl-[prolipoprotein] + sn-glycerol 1-phosphate + H(+). It functions in the pathway protein modification; lipoprotein biosynthesis (diacylglyceryl transfer). In terms of biological role, catalyzes the transfer of the diacylglyceryl group from phosphatidylglycerol to the sulfhydryl group of the N-terminal cysteine of a prolipoprotein, the first step in the formation of mature lipoproteins. The polypeptide is Phosphatidylglycerol--prolipoprotein diacylglyceryl transferase (Borreliella burgdorferi (strain ZS7) (Borrelia burgdorferi)).